We begin with the raw amino-acid sequence, 413 residues long: Ureide permease 5 (413 aa).

Over 1–18 (MMIAQELGIYVVESKGGA) the chain is Extracellular. The chain crosses the membrane as a helical span at residues 19-39 (ILCLLLSLLCLGTWPALMALL). Topologically, residues 40–50 (ERRGRLPQHTY) are cytoplasmic. The helical transmembrane segment at 51–71 (LDYSITNFLAAIFIAFVFGGI) threads the bilayer. At 72–91 (GESTHEAPSFITQLTQIQDN) the chain is on the extracellular side. The chain crosses the membrane as a helical span at residues 92–112 (WPSVLFAMAGGVGLSIGNLAT). Residues 113 to 115 (QYS) are Cytoplasmic-facing. The helical transmembrane segment at 116–136 (LAFVGLSVTEVTAASITVVVG) threads the bilayer. The Extracellular segment spans residues 137–149 (TTVNYFLDNGLNR). Residues 150-170 (ADILFSGVGCFMVAVCLGSAV) form a helical membrane-spanning segment. Residues 171-240 (HSSNSADIKA…RAIKVLGKSM (70 aa)) lie on the Cytoplasmic side of the membrane. 232–239 (AIKVLGKS) provides a ligand contact to ATP. A helical membrane pass occupies residues 241–261 (VVGLGITFFAGLSFSLFSPLF). At 262–278 (NLATNDQWHTLKQGVPK) the chain is on the extracellular side. The chain crosses the membrane as a helical span at residues 279 to 299 (LIVYTAFFYFSLSCFVIAVAL). The Cytoplasmic segment spans residues 300–326 (NISFLYKPVLDSPRSSFREYLSDWNGR). The chain crosses the membrane as a helical span at residues 327-347 (GWALAAGLLCGFGNGLQFMGG). Residues 348–352 (QAAGY) are Extracellular-facing. Residues 353 to 373 (AASDAVQALPLVSTFWGIYLF) form a helical membrane-spanning segment. Residues 374–384 (GEYRRSSTRTY) lie on the Cytoplasmic side of the membrane. A helical transmembrane segment spans residues 385–405 (ALLVGMLVMFTVAVGLLMASA). Residues 406–413 (GERETRFT) are Extracellular-facing.

The protein belongs to the plant ureide permease (TC 2.A.7.19) family. Expressed in lateral roots, rosette leaves, stems, stipules, flower stigma, pedicels and the connective tissue between pollen sacks.

It localises to the membrane. Functionally, proton-coupled transporter that transports a wide spectrum of oxo derivatives of heterocyclic nitrogen compounds, including allantoin, uric acid and xanthine, but not adenine. Mediates transport of uracil and 5-fluorouracil (a toxic uracil analog). Proton-coupled transporter that transports a wide spectrum of oxo derivatives of heterocyclic nitrogen compounds, including allantoin, xanthine and uracil. The chain is Ureide permease 5 from Arabidopsis thaliana (Mouse-ear cress).